A 616-amino-acid polypeptide reads, in one-letter code: Chaperone protein DnaK (616 aa).

Thr-175 is modified (phosphothreonine; by autocatalysis). The segment at Gly-579 to Val-605 is disordered.

It belongs to the heat shock protein 70 family.

In terms of biological role, acts as a chaperone. This Clostridium botulinum (strain Alaska E43 / Type E3) protein is Chaperone protein DnaK.